We begin with the raw amino-acid sequence, 728 residues long: Catalase-peroxidase (728 aa).

The segment at 1 to 26 (MDNPTDTAGKCPVAHGNKPRGPSNRD) is disordered. The tryptophyl-tyrosyl-methioninium (Trp-Tyr) (with M-244) cross-link spans 96–218 (WHSAGTYRIT…LGAVQMGLIY (123 aa)). Catalysis depends on His97, which acts as the Proton acceptor. The tryptophyl-tyrosyl-methioninium (Tyr-Met) (with W-96) cross-link spans 218–244 (YVNPEGPNGNPDPVAAARDIRETFARM). His259 contributes to the heme b binding site.

Belongs to the peroxidase family. Peroxidase/catalase subfamily. In terms of assembly, homodimer or homotetramer. It depends on heme b as a cofactor. Post-translationally, formation of the three residue Trp-Tyr-Met cross-link is important for the catalase, but not the peroxidase activity of the enzyme.

It carries out the reaction H2O2 + AH2 = A + 2 H2O. The enzyme catalyses 2 H2O2 = O2 + 2 H2O. Functionally, bifunctional enzyme with both catalase and broad-spectrum peroxidase activity. Important for stationary phase survival. This Rhizobium etli (strain ATCC 51251 / DSM 11541 / JCM 21823 / NBRC 15573 / CFN 42) protein is Catalase-peroxidase.